Consider the following 427-residue polypeptide: uncharacterized protein (427 aa).

The stretch at 135 to 168 (PILKQKLVSLESKVKKIDKEMEKHNDLLKEIQEN) forms a coiled coil.

This is an uncharacterized protein from Arabidopsis thaliana (Mouse-ear cress).